Consider the following 335-residue polypeptide: Glycerol-3-phosphate dehydrogenase [NAD(P)+] (335 aa).

Residues Ser-12, Trp-13, and Lys-107 each contribute to the NADPH site. Residues Lys-107, Gly-138, and Ser-140 each coordinate sn-glycerol 3-phosphate. Residue Ala-142 coordinates NADPH. Residues Lys-193, Asp-246, Ser-256, Arg-257, and Asn-258 each coordinate sn-glycerol 3-phosphate. Residue Lys-193 is the Proton acceptor of the active site. Residue Arg-257 coordinates NADPH. 2 residues coordinate NADPH: Val-281 and Glu-283.

It belongs to the NAD-dependent glycerol-3-phosphate dehydrogenase family.

It localises to the cytoplasm. The enzyme catalyses sn-glycerol 3-phosphate + NAD(+) = dihydroxyacetone phosphate + NADH + H(+). The catalysed reaction is sn-glycerol 3-phosphate + NADP(+) = dihydroxyacetone phosphate + NADPH + H(+). It functions in the pathway membrane lipid metabolism; glycerophospholipid metabolism. In terms of biological role, catalyzes the reduction of the glycolytic intermediate dihydroxyacetone phosphate (DHAP) to sn-glycerol 3-phosphate (G3P), the key precursor for phospholipid synthesis. The polypeptide is Glycerol-3-phosphate dehydrogenase [NAD(P)+] (Geobacter sulfurreducens (strain ATCC 51573 / DSM 12127 / PCA)).